The following is a 406-amino-acid chain: Leucine aminopeptidase 1 (406 aa).

The signal sequence occupies residues Met1–Gly18. The propeptide occupies Arg19–Lys94. An N-linked (GlcNAc...) asparagine glycan is attached at Asn186. Zn(2+) contacts are provided by His194, Asp213, Glu252, and Asp279. Residue Asn306 is glycosylated (N-linked (GlcNAc...) asparagine). Cysteines 328 and 332 form a disulfide. His361 serves as a coordination point for Zn(2+).

It belongs to the peptidase M28 family. M28E subfamily. In terms of assembly, monomer. Requires Zn(2+) as cofactor.

Its subcellular location is the secreted. Functionally, extracellular aminopeptidase that allows assimilation of proteinaceous substrates. The sequence is that of Leucine aminopeptidase 1 (LAP1) from Chaetomium globosum (strain ATCC 6205 / CBS 148.51 / DSM 1962 / NBRC 6347 / NRRL 1970) (Soil fungus).